The chain runs to 542 residues: Katanin p60 ATPase-containing subunit A-like 2 (542 aa).

The LisH domain occupies 25–57; the sequence is RRKNLLILIMHYLLQEGYMDSANSLEQETKISL. 2 disordered regions span residues 94 to 126 and 142 to 168; these read LDHD…RIAQ and HAHQ…ASEI. Polar residues predominate over residues 114-126; that stretch reads GSNSTQGLPRIAQ. 298 to 305 serves as a coordination point for ATP; sequence GPPGTGKT.

This sequence belongs to the AAA ATPase family. Katanin p60 subunit A1 subfamily. A-like 2 sub-subfamily.

The protein localises to the cytoplasm. Its subcellular location is the cytoskeleton. It localises to the spindle. It is found in the spindle pole. It carries out the reaction n ATP + n H2O + a microtubule = n ADP + n phosphate + (n+1) alpha/beta tubulin heterodimers.. Functionally, severs microtubules in vitro in an ATP-dependent manner. This activity may promote rapid reorganization of cellular microtubule arrays. This is Katanin p60 ATPase-containing subunit A-like 2 (katnal2) from Xenopus tropicalis (Western clawed frog).